The sequence spans 640 residues: DNA mismatch repair protein MutL (640 aa).

A disordered region spans residues 343–389 (TKNTATDQRAENLEVKPDSKEKELQPKESQHPRLVACDLPSGKIMPP). A compositionally biased stretch (basic and acidic residues) spans 350 to 373 (QRAENLEVKPDSKEKELQPKESQH).

This sequence belongs to the DNA mismatch repair MutL/HexB family.

In terms of biological role, this protein is involved in the repair of mismatches in DNA. It is required for dam-dependent methyl-directed DNA mismatch repair. May act as a 'molecular matchmaker', a protein that promotes the formation of a stable complex between two or more DNA-binding proteins in an ATP-dependent manner without itself being part of a final effector complex. This chain is DNA mismatch repair protein MutL, found in Desulforamulus reducens (strain ATCC BAA-1160 / DSM 100696 / MI-1) (Desulfotomaculum reducens).